Consider the following 86-residue polypeptide: Large ribosomal subunit protein bL31B (86 aa).

The protein belongs to the bacterial ribosomal protein bL31 family. Type B subfamily. As to quaternary structure, part of the 50S ribosomal subunit.

The sequence is that of Large ribosomal subunit protein bL31B from Streptococcus equi subsp. zooepidemicus (strain H70).